The chain runs to 318 residues: UDP-N-acetylenolpyruvoylglucosamine reductase (318 aa).

In terms of domain architecture, FAD-binding PCMH-type spans 38 to 204 (IGGICPVVVE…LGIEILLKEG (167 aa)). Residue Arg-182 is part of the active site. The interval 212–232 (SLKDKRDRRNSSQPENKKSAG) is disordered. The segment covering 213–229 (LKDKRDRRNSSQPENKK) has biased composition (basic and acidic residues). The active-site Proton donor is the Ser-233. The active site involves Glu-310.

It belongs to the MurB family. FAD is required as a cofactor.

The protein localises to the cytoplasm. It catalyses the reaction UDP-N-acetyl-alpha-D-muramate + NADP(+) = UDP-N-acetyl-3-O-(1-carboxyvinyl)-alpha-D-glucosamine + NADPH + H(+). Its pathway is cell wall biogenesis; peptidoglycan biosynthesis. In terms of biological role, cell wall formation. In Leptospira borgpetersenii serovar Hardjo-bovis (strain L550), this protein is UDP-N-acetylenolpyruvoylglucosamine reductase.